A 368-amino-acid polypeptide reads, in one-letter code: Phospho-N-acetylmuramoyl-pentapeptide-transferase (368 aa).

The next 10 helical transmembrane spans lie at 34 to 54, 79 to 99, 102 to 122, 140 to 160, 176 to 196, 207 to 227, 247 to 267, 271 to 291, 296 to 316, and 345 to 365; these read GAVV…IDHL, TPTM…VLWA, LNPY…VGFY, ARLL…VRLG, LVIK…VGAG, GLAI…AYLA, LAVL…FNAP, IFMG…IAVA, IVLA…IVQV, and QIVI…LSTL.

Belongs to the glycosyltransferase 4 family. MraY subfamily. Mg(2+) is required as a cofactor.

The protein resides in the cell inner membrane. It catalyses the reaction UDP-N-acetyl-alpha-D-muramoyl-L-alanyl-gamma-D-glutamyl-meso-2,6-diaminopimeloyl-D-alanyl-D-alanine + di-trans,octa-cis-undecaprenyl phosphate = di-trans,octa-cis-undecaprenyl diphospho-N-acetyl-alpha-D-muramoyl-L-alanyl-D-glutamyl-meso-2,6-diaminopimeloyl-D-alanyl-D-alanine + UMP. Its pathway is cell wall biogenesis; peptidoglycan biosynthesis. Functionally, catalyzes the initial step of the lipid cycle reactions in the biosynthesis of the cell wall peptidoglycan: transfers peptidoglycan precursor phospho-MurNAc-pentapeptide from UDP-MurNAc-pentapeptide onto the lipid carrier undecaprenyl phosphate, yielding undecaprenyl-pyrophosphoryl-MurNAc-pentapeptide, known as lipid I. The chain is Phospho-N-acetylmuramoyl-pentapeptide-transferase from Bradyrhizobium sp. (strain ORS 278).